Reading from the N-terminus, the 32-residue chain is Cytochrome b6-f complex subunit 6 (32 aa).

A helical membrane pass occupies residues isoleucine 4 to threonine 26.

Belongs to the PetL family. In terms of assembly, the 4 large subunits of the cytochrome b6-f complex are cytochrome b6, subunit IV (17 kDa polypeptide, PetD), cytochrome f and the Rieske protein, while the 4 small subunits are PetG, PetL, PetM and PetN. The complex functions as a dimer.

The protein localises to the plastid. The protein resides in the chloroplast thylakoid membrane. Functionally, component of the cytochrome b6-f complex, which mediates electron transfer between photosystem II (PSII) and photosystem I (PSI), cyclic electron flow around PSI, and state transitions. PetL is important for photoautotrophic growth as well as for electron transfer efficiency and stability of the cytochrome b6-f complex. The chain is Cytochrome b6-f complex subunit 6 from Tetradesmus obliquus (Green alga).